Reading from the N-terminus, the 355-residue chain is MTASTSVAVGCAVGIPVGVGIIIAVCFWFNLQKRYKREEQDDRELERAIYDESGFVSFDNFGPLRDSKDEAALASSELKNPDHTSGSSEGSAHPEEKDGKSRDQEKPLGKKNSKYYVPAYRRKINLLQVRNNNYGNNARQKSVVDLPSINNSSNVSLSSSQRHITKRQISVYDQMVPVISDEGPKFFADPSSDTNTSNDQNKASMIELKHNTRQSINENLIRKLQNQDFGSYYPRRASSSFLNGNISNASFHTRNSSITSVNKRDALEDVFATPKSAAQSQLPNTFDKDNEGIDADHSVKDSRSAITDKDKDIYKLQNNYDVGNIGEIAEEDQYENEFTNYSQSKREFIESLRPK.

The Extracellular segment spans residues 1-8 (MTASTSVA). A helical; Signal-anchor for type III membrane protein transmembrane segment spans residues 9–29 (VGCAVGIPVGVGIIIAVCFWF). The Cytoplasmic segment spans residues 30 to 355 (NLQKRYKREE…REFIESLRPK (326 aa)). A disordered region spans residues 70–114 (EAALASSELKNPDHTSGSSEGSAHPEEKDGKSRDQEKPLGKKNSK). The segment covering 92-108 (AHPEEKDGKSRDQEKPL) has biased composition (basic and acidic residues). Ser142 is subject to Phosphoserine. Residue Thr273 is modified to Phosphothreonine. A disordered region spans residues 276 to 298 (SAAQSQLPNTFDKDNEGIDADHS). A compositionally biased stretch (basic and acidic residues) spans 286–298 (FDKDNEGIDADHS).

Belongs to the SKG1 family.

Its subcellular location is the cell membrane. The protein resides in the bud membrane. Plays a role in cell wall integrity. Affects the cell wall polymer composition in the growing region of the cell. The protein is Suppressor of lethality of KEX2 GAS1 double null mutant protein 1 (SKG1) of Saccharomyces cerevisiae (strain Lalvin EC1118 / Prise de mousse) (Baker's yeast).